The primary structure comprises 342 residues: Nucleoid-associated protein Sbal223_1817 (342 aa).

This sequence belongs to the YejK family.

The protein resides in the cytoplasm. It is found in the nucleoid. This Shewanella baltica (strain OS223) protein is Nucleoid-associated protein Sbal223_1817.